Reading from the N-terminus, the 267-residue chain is Undecaprenyl-diphosphatase 2 (267 aa).

Helical transmembrane passes span 4–24 (IYFI…FLPI), 43–63 (EEKV…CWLF), 84–104 (FAVI…LFIH), 109–129 (VLFN…IILW), 147–167 (IGFK…IPGT), 186–206 (AATE…AIYD), 219–239 (ILAI…VVNA), and 243–263 (FVAK…GLII).

This sequence belongs to the UppP family.

The protein resides in the cell inner membrane. It carries out the reaction di-trans,octa-cis-undecaprenyl diphosphate + H2O = di-trans,octa-cis-undecaprenyl phosphate + phosphate + H(+). Functionally, catalyzes the dephosphorylation of undecaprenyl diphosphate (UPP). Confers resistance to bacitracin. This Shewanella oneidensis (strain ATCC 700550 / JCM 31522 / CIP 106686 / LMG 19005 / NCIMB 14063 / MR-1) protein is Undecaprenyl-diphosphatase 2.